Here is a 201-residue protein sequence, read N- to C-terminus: Thioredoxin reductase-like selenoprotein T (201 aa).

Positions 1 to 26 (MARSSGPLCLLLLGGLVAGILSGASA) are cleaved as a signal peptide. Positions 51–54 (CVSU) form a cross-link, cysteinyl-selenocysteine (Cys-Sec). Position 54 (Sec-54) is a non-standard amino acid, selenocysteine. Residues 96–116 (VFKLVLIGLIIAGKDPFAFFG) form a helical membrane-spanning segment.

Belongs to the SelWTH family. Selenoprotein T subfamily. In terms of processing, may contain a selenide-sulfide bond between Cys-51 and Sec-54. This bond is speculated to serve as redox-active pair.

The protein localises to the endoplasmic reticulum membrane. The catalysed reaction is [thioredoxin]-dithiol + NADP(+) = [thioredoxin]-disulfide + NADPH + H(+). In terms of biological role, selenoprotein with thioredoxin reductase-like oxidoreductase activity. In Xenopus tropicalis (Western clawed frog), this protein is Thioredoxin reductase-like selenoprotein T (selenot).